Here is a 284-residue protein sequence, read N- to C-terminus: Tropomyosin (284 aa).

Positions 1 to 284 (MDGIKKKMIA…DQTFAELTGY (284 aa)) form a coiled coil. The disordered stretch occupies residues 111-131 (TKLEEASKTAEESERGRKDLE).

Belongs to the tropomyosin family. In terms of assembly, homodimer.

Its function is as follows. Tropomyosin, in association with the troponin complex, plays a central role in the calcium dependent regulation of muscle contraction. This is Tropomyosin from Schistosoma japonicum (Blood fluke).